The chain runs to 370 residues: tRNA N(3)-cytidine methyltransferase METTL2 (370 aa).

Positions 72, 76, 181, 206, 232, 233, and 253 each coordinate S-adenosyl-L-methionine.

Belongs to the methyltransferase superfamily. METL family. In terms of assembly, monomer.

It localises to the cytoplasm. It carries out the reaction cytidine(32) in tRNA(Thr) + S-adenosyl-L-methionine = N(3)-methylcytidine(32) in tRNA(Thr) + S-adenosyl-L-homocysteine + H(+). The catalysed reaction is cytidine(32) in tRNA(Arg)(CCU) + S-adenosyl-L-methionine = N(3)-methylcytidine(32) in tRNA(Arg)(CCU) + S-adenosyl-L-homocysteine + H(+). S-adenosyl-L-methionine-dependent methyltransferase that mediates N(3)-methylcytidine modification of residue 32 of the tRNA anticodon loop of tRNA(Thr)(UGU) and tRNA(Arg)(CCU). N(3)-methylcytidine methylation by METTL2 requires the N6-threonylcarbamoylation of tRNA (t6A37) by the EKC/KEOPS complex as prerequisite. This is tRNA N(3)-cytidine methyltransferase METTL2 (METTL2) from Gallus gallus (Chicken).